We begin with the raw amino-acid sequence, 173 residues long: Large ribosomal subunit protein uL10 (173 aa).

Belongs to the universal ribosomal protein uL10 family. Part of the ribosomal stalk of the 50S ribosomal subunit. The N-terminus interacts with L11 and the large rRNA to form the base of the stalk. The C-terminus forms an elongated spine to which L12 dimers bind in a sequential fashion forming a multimeric L10(L12)X complex.

In terms of biological role, forms part of the ribosomal stalk, playing a central role in the interaction of the ribosome with GTP-bound translation factors. This is Large ribosomal subunit protein uL10 from Chlorobaculum parvum (strain DSM 263 / NCIMB 8327) (Chlorobium vibrioforme subsp. thiosulfatophilum).